The sequence spans 238 residues: Uridylate kinase (238 aa).

ATP is bound at residue K10–G13. Residues G18–G23 are involved in allosteric activation by GTP. Residue G52 participates in UMP binding. The ATP site is built by G53 and R57. UMP-binding positions include D73 and T134–T141. ATP is bound by residues T161, Y167, and D170.

It belongs to the UMP kinase family. In terms of assembly, homohexamer.

Its subcellular location is the cytoplasm. The enzyme catalyses UMP + ATP = UDP + ADP. The protein operates within pyrimidine metabolism; CTP biosynthesis via de novo pathway; UDP from UMP (UMPK route): step 1/1. Allosterically activated by GTP. Inhibited by UTP. In terms of biological role, catalyzes the reversible phosphorylation of UMP to UDP. The polypeptide is Uridylate kinase (Campylobacter fetus subsp. fetus (strain 82-40)).